Reading from the N-terminus, the 206-residue chain is Small ribosomal subunit protein uS4 (206 aa).

The 61-residue stretch at 96 to 156 folds into the S4 RNA-binding domain; it reads GRLDNVVYRM…EKAKKQARIK (61 aa).

The protein belongs to the universal ribosomal protein uS4 family. In terms of assembly, part of the 30S ribosomal subunit. Contacts protein S5. The interaction surface between S4 and S5 is involved in control of translational fidelity.

Its function is as follows. One of the primary rRNA binding proteins, it binds directly to 16S rRNA where it nucleates assembly of the body of the 30S subunit. In terms of biological role, with S5 and S12 plays an important role in translational accuracy. This is Small ribosomal subunit protein uS4 from Aeromonas salmonicida (strain A449).